Consider the following 1131-residue polypeptide: DNA polymerase II large subunit (1131 aa).

This sequence belongs to the archaeal DNA polymerase II family. In terms of assembly, heterodimer of a large subunit and a small subunit.

It catalyses the reaction DNA(n) + a 2'-deoxyribonucleoside 5'-triphosphate = DNA(n+1) + diphosphate. The catalysed reaction is Exonucleolytic cleavage in the 3'- to 5'-direction to yield nucleoside 5'-phosphates.. Possesses two activities: a DNA synthesis (polymerase) and an exonucleolytic activity that degrades single-stranded DNA in the 3'- to 5'-direction. Has a template-primer preference which is characteristic of a replicative DNA polymerase. This chain is DNA polymerase II large subunit, found in Methanococcus maripaludis (strain C7 / ATCC BAA-1331).